The sequence spans 480 residues: ATP-dependent rRNA helicase RRP3 (480 aa).

Composition is skewed to basic and acidic residues over residues 1 to 17 (MAKA…KEES) and 33 to 46 (DTTK…EPKK). The tract at residues 1–63 (MAKATEKRVK…VEVDESEEQT (63 aa)) is disordered. The Q motif motif lies at 64 to 92 (KTFKDLGVIDSICETCEELKFTKPTPIQA). The Helicase ATP-binding domain maps to 95-266 (IPYALEGRDI…RASLVDPVRV (172 aa)). 108-115 (AQTGSGKT) provides a ligand contact to ATP. A DEAD box motif is present at residues 214–217 (DEAD). In terms of domain architecture, Helicase C-terminal spans 277–437 (NLLQYMVFCP…SYPLESEAVM (161 aa)). The disordered stretch occupies residues 450–480 (AIQEMKGEDGTKKRSKFDKKRRRDEMDIGEQ). A compositionally biased stretch (basic residues) spans 462 to 471 (KRSKFDKKRR).

The protein belongs to the DEAD box helicase family. DDX47/RRP3 subfamily. Interacts with the SSU processome.

It localises to the nucleus. It catalyses the reaction ATP + H2O = ADP + phosphate + H(+). In terms of biological role, ATP-dependent rRNA helicase required for pre-ribosomal RNA processing. Involved in the maturation of the 35S-pre-rRNA and to its cleavage to mature 18S rRNA. This is ATP-dependent rRNA helicase RRP3 from Yarrowia lipolytica (strain CLIB 122 / E 150) (Yeast).